The sequence spans 208 residues: Outer-membrane lipoprotein carrier protein (208 aa).

Residues 1 to 21 form the signal peptide; sequence MKKLNTLLLVLGSLVATPSFA. Residues 188 to 208 are disordered; it reads KSTFEFTPPEGVEIDDQSNGE. Residues 199-208 are compositionally biased toward acidic residues; that stretch reads VEIDDQSNGE.

It belongs to the LolA family. As to quaternary structure, monomer.

The protein resides in the periplasm. Its function is as follows. Participates in the translocation of lipoproteins from the inner membrane to the outer membrane. Only forms a complex with a lipoprotein if the residue after the N-terminal Cys is not an aspartate (The Asp acts as a targeting signal to indicate that the lipoprotein should stay in the inner membrane). The protein is Outer-membrane lipoprotein carrier protein of Pseudoalteromonas translucida (strain TAC 125).